A 244-amino-acid polypeptide reads, in one-letter code: tRNA pseudouridine synthase A (244 aa).

Aspartate 52 acts as the Nucleophile in catalysis. Tyrosine 110 contributes to the substrate binding site.

Belongs to the tRNA pseudouridine synthase TruA family. As to quaternary structure, homodimer.

The enzyme catalyses uridine(38/39/40) in tRNA = pseudouridine(38/39/40) in tRNA. In terms of biological role, formation of pseudouridine at positions 38, 39 and 40 in the anticodon stem and loop of transfer RNAs. This Clostridium botulinum (strain Alaska E43 / Type E3) protein is tRNA pseudouridine synthase A.